The primary structure comprises 372 residues: Glutamate 5-kinase (372 aa).

Position 14 (Lys-14) interacts with ATP. Substrate is bound by residues Ser-55, Asp-142, and Asn-154. Residues 174–175 and 216–222 each bind ATP; these read SD and TGGMETK. Positions 279–357 constitute a PUA domain; sequence QGSIIVDLGA…WEIADVLGHK (79 aa).

It belongs to the glutamate 5-kinase family.

It localises to the cytoplasm. The enzyme catalyses L-glutamate + ATP = L-glutamyl 5-phosphate + ADP. The protein operates within amino-acid biosynthesis; L-proline biosynthesis; L-glutamate 5-semialdehyde from L-glutamate: step 1/2. Functionally, catalyzes the transfer of a phosphate group to glutamate to form L-glutamate 5-phosphate. The polypeptide is Glutamate 5-kinase (Carboxydothermus hydrogenoformans (strain ATCC BAA-161 / DSM 6008 / Z-2901)).